The sequence spans 391 residues: PPE family protein PPE15 (391 aa).

A eukaryotic-like SH3 domain region spans residues leucine 312 to alanine 367.

This sequence belongs to the mycobacterial PPE family. In terms of assembly, forms a heterodimer with PE8. The dimer forms a 1:1:1 heterotrimeric complex with EspG5. PPE15 interacts directly with EspG5. Interacts via the C-terminal region with host Toll-like receptor 4 (TLR4). Interacts, also via the C-terminal region, with two cytosolic subunits of the host NOX complex, p47phox (NCF1) and p67phox (NCF2).

The protein localises to the secreted. It is found in the host mitochondrion. May play a critical role in the homeostasis of triacylglycerol-containing lipid droplets in M.tuberculosis and influence the entry of the pathogen into a dormant state. Is recognized by host TLR4 receptor at the macrophage cell surface, which modulates the host immune response, induces mitochondrial stress and perturbations, and induces macrophage apoptosis leading to pathogen persistence. Also downregulates NOX-mediated reactive oxygen species (ROS) generation in THP1 macrophages, which increases intracellular survival of bacteria. PPE15 interacts with two subunits of the host NADPH oxidase (NOX) complex in the cytosol of macrophages and prevents their migration to the membrane, which inhibits the assembly of the NOX complex at the plasma membrane of THP1 macrophages. This leads to reduced NOX activity and diminished ROS generation. This chain is PPE family protein PPE15 (PPE15), found in Mycobacterium tuberculosis (strain CDC 1551 / Oshkosh).